The following is a 360-amino-acid chain: Phenylalanine--tRNA ligase alpha subunit (360 aa).

Glutamate 260 serves as a coordination point for Mg(2+).

This sequence belongs to the class-II aminoacyl-tRNA synthetase family. Phe-tRNA synthetase alpha subunit type 1 subfamily. Tetramer of two alpha and two beta subunits. The cofactor is Mg(2+).

It localises to the cytoplasm. It carries out the reaction tRNA(Phe) + L-phenylalanine + ATP = L-phenylalanyl-tRNA(Phe) + AMP + diphosphate + H(+). The sequence is that of Phenylalanine--tRNA ligase alpha subunit from Bradyrhizobium sp. (strain ORS 278).